Consider the following 311-residue polypeptide: 4-hydroxy-tetrahydrodipicolinate synthase (311 aa).

Residue Thr51 coordinates pyruvate. Catalysis depends on Tyr140, which acts as the Proton donor/acceptor. Catalysis depends on Lys168, which acts as the Schiff-base intermediate with substrate. Position 209 (Ile209) interacts with pyruvate.

The protein belongs to the DapA family. As to quaternary structure, homotetramer; dimer of dimers.

Its subcellular location is the cytoplasm. It catalyses the reaction L-aspartate 4-semialdehyde + pyruvate = (2S,4S)-4-hydroxy-2,3,4,5-tetrahydrodipicolinate + H2O + H(+). It participates in amino-acid biosynthesis; L-lysine biosynthesis via DAP pathway; (S)-tetrahydrodipicolinate from L-aspartate: step 3/4. Its function is as follows. Catalyzes the condensation of (S)-aspartate-beta-semialdehyde [(S)-ASA] and pyruvate to 4-hydroxy-tetrahydrodipicolinate (HTPA). The chain is 4-hydroxy-tetrahydrodipicolinate synthase from Streptococcus pneumoniae (strain CGSP14).